The following is a 90-amino-acid chain: Putative membrane protein insertion efficiency factor (90 aa).

The protein belongs to the UPF0161 family.

The protein localises to the cell inner membrane. Its function is as follows. Could be involved in insertion of integral membrane proteins into the membrane. This is Putative membrane protein insertion efficiency factor from Thermosynechococcus vestitus (strain NIES-2133 / IAM M-273 / BP-1).